A 352-amino-acid chain; its full sequence is Histidine protein kinase SaeS (352 aa).

Helical transmembrane passes span 9–29 (QIII…VIAY) and 41–61 (TLAI…SIFI). The 220-residue stretch at 130–349 (NLAHDLKTPL…TMTLTLKKFQ (220 aa)) folds into the Histidine kinase domain. H133 is subject to Phosphohistidine; by autocatalysis.

Post-translationally, autophosphorylated.

It localises to the cell membrane. The catalysed reaction is ATP + protein L-histidine = ADP + protein N-phospho-L-histidine.. Functionally, member of the two-component regulatory system SaeR/SaeS. Probably functions as a membrane-associated protein kinase that upon sensing the appropriate signal, autophosphorylates and in turn activates the cytosolic response regulator SaeR. The chain is Histidine protein kinase SaeS (saeS) from Staphylococcus epidermidis (strain ATCC 35984 / DSM 28319 / BCRC 17069 / CCUG 31568 / BM 3577 / RP62A).